A 185-amino-acid polypeptide reads, in one-letter code: ATP-dependent protease subunit HslV (185 aa).

T6 is an active-site residue. The Na(+) site is built by G162, C165, and T168.

The protein belongs to the peptidase T1B family. HslV subfamily. As to quaternary structure, a double ring-shaped homohexamer of HslV is capped on each side by a ring-shaped HslU homohexamer. The assembly of the HslU/HslV complex is dependent on binding of ATP.

The protein resides in the cytoplasm. The enzyme catalyses ATP-dependent cleavage of peptide bonds with broad specificity.. Allosterically activated by HslU binding. Protease subunit of a proteasome-like degradation complex believed to be a general protein degrading machinery. In Nitratidesulfovibrio vulgaris (strain DSM 19637 / Miyazaki F) (Desulfovibrio vulgaris), this protein is ATP-dependent protease subunit HslV.